The following is a 196-amino-acid chain: Transcriptional regulatory protein UhpA (196 aa).

In terms of domain architecture, Response regulatory spans 3–116 (TVALIDDHLI…ELIAAVHTVA (114 aa)). Asp54 is subject to 4-aspartylphosphate. In terms of domain architecture, HTH luxR-type spans 131–196 (AAGRQDPLTK…ELAHRMFDGW (66 aa)). A DNA-binding region (H-T-H motif) is located at residues 155–174 (VKEIAAELGLSPKTVHVHRA).

Phosphorylated and dephosphorylated by UhpB.

Its subcellular location is the cytoplasm. Functionally, part of the UhpABC signaling cascade that controls the expression of the hexose phosphate transporter UhpT. Activates the transcription of the uhpT gene. Acts by binding specifically to the uhpT promoter region. This is Transcriptional regulatory protein UhpA (uhpA) from Salmonella typhimurium (strain LT2 / SGSC1412 / ATCC 700720).